The following is a 109-amino-acid chain: Large ribosomal subunit protein uL22 (109 aa).

It belongs to the universal ribosomal protein uL22 family. As to quaternary structure, part of the 50S ribosomal subunit.

In terms of biological role, this protein binds specifically to 23S rRNA; its binding is stimulated by other ribosomal proteins, e.g. L4, L17, and L20. It is important during the early stages of 50S assembly. It makes multiple contacts with different domains of the 23S rRNA in the assembled 50S subunit and ribosome. The globular domain of the protein is located near the polypeptide exit tunnel on the outside of the subunit, while an extended beta-hairpin is found that lines the wall of the exit tunnel in the center of the 70S ribosome. The protein is Large ribosomal subunit protein uL22 of Dehalococcoides mccartyi (strain ATCC BAA-2266 / KCTC 15142 / 195) (Dehalococcoides ethenogenes (strain 195)).